Here is a 105-residue protein sequence, read N- to C-terminus: Nucleoid-associated protein SaurJH1_0513 (105 aa).

A disordered region spans residues 1 to 33 (MRGGGNMQQMMKQMQKMQKKMAQEQKKLKEERI). Residues 7–16 (MQQMMKQMQK) are compositionally biased toward low complexity. Over residues 21-33 (MAQEQKKLKEERI) the composition is skewed to basic and acidic residues.

This sequence belongs to the YbaB/EbfC family. In terms of assembly, homodimer.

Its subcellular location is the cytoplasm. It localises to the nucleoid. Functionally, binds to DNA and alters its conformation. May be involved in regulation of gene expression, nucleoid organization and DNA protection. This is Nucleoid-associated protein SaurJH1_0513 from Staphylococcus aureus (strain JH1).